A 222-amino-acid chain; its full sequence is 2-C-methyl-D-erythritol 4-phosphate cytidylyltransferase (222 aa).

It belongs to the IspD/TarI cytidylyltransferase family. IspD subfamily.

The catalysed reaction is 2-C-methyl-D-erythritol 4-phosphate + CTP + H(+) = 4-CDP-2-C-methyl-D-erythritol + diphosphate. It participates in isoprenoid biosynthesis; isopentenyl diphosphate biosynthesis via DXP pathway; isopentenyl diphosphate from 1-deoxy-D-xylulose 5-phosphate: step 2/6. Catalyzes the formation of 4-diphosphocytidyl-2-C-methyl-D-erythritol from CTP and 2-C-methyl-D-erythritol 4-phosphate (MEP). The polypeptide is 2-C-methyl-D-erythritol 4-phosphate cytidylyltransferase (Porphyromonas gingivalis (strain ATCC BAA-308 / W83)).